The primary structure comprises 122 residues: MGKTSQKTITRLKRQVRVRKKVTGTAERPRLNVFRSANHIYAQLIDDVQGVTLAAASTCTEGVAQSGVHTGNKASAAAVGAAIARVALQKDIRSVVFDRNGFLYHGRIQALADAAREAGLDF.

Belongs to the universal ribosomal protein uL18 family. As to quaternary structure, part of the 50S ribosomal subunit; part of the 5S rRNA/L5/L18/L25 subcomplex. Contacts the 5S and 23S rRNAs.

In terms of biological role, this is one of the proteins that bind and probably mediate the attachment of the 5S RNA into the large ribosomal subunit, where it forms part of the central protuberance. This chain is Large ribosomal subunit protein uL18, found in Trichlorobacter lovleyi (strain ATCC BAA-1151 / DSM 17278 / SZ) (Geobacter lovleyi).